Consider the following 270-residue polypeptide: Ribosomal RNA small subunit methyltransferase A (270 aa).

Residues Asn-15, Ile-17, Gly-42, Glu-64, Asp-89, and Asn-108 each contribute to the S-adenosyl-L-methionine site.

The protein belongs to the class I-like SAM-binding methyltransferase superfamily. rRNA adenine N(6)-methyltransferase family. RsmA subfamily.

Its subcellular location is the cytoplasm. The enzyme catalyses adenosine(1518)/adenosine(1519) in 16S rRNA + 4 S-adenosyl-L-methionine = N(6)-dimethyladenosine(1518)/N(6)-dimethyladenosine(1519) in 16S rRNA + 4 S-adenosyl-L-homocysteine + 4 H(+). In terms of biological role, specifically dimethylates two adjacent adenosines (A1518 and A1519) in the loop of a conserved hairpin near the 3'-end of 16S rRNA in the 30S particle. May play a critical role in biogenesis of 30S subunits. The protein is Ribosomal RNA small subunit methyltransferase A of Anaplasma marginale (strain Florida).